The sequence spans 811 residues: DEP domain-containing protein 1A (811 aa).

Residues 24 to 108 (FRAGMPLRKH…DNNQLFRFPA (85 aa)) form the DEP domain. One can recognise a Rho-GAP domain in the interval 281-321 (DYFLDLPEPLLTFEYYELFVNILVVCGYITVSDRSSGIHKI). S512 carries the post-translational modification Phosphoserine. The segment at 598–653 (AIDALQLCCLLLPPPNRRKLQLLMRMISRMSQNVDMPKLHDAMGTRSLMIHTFSRC) is interaction with ZNF224.

In terms of assembly, isoform 2 and isoform 5 can form homodimers and heterodimers. Interacts with ZNF224. As to expression, expressed in testis. Up-regulated in bladder cancer cells (at protein level).

The protein resides in the nucleus. Its function is as follows. May be involved in transcriptional regulation as a transcriptional corepressor. The DEPDC1A-ZNF224 complex may play a critical role in bladder carcinogenesis by repressing the transcription of the A20 gene, leading to transport of NF-KB protein into the nucleus, resulting in suppression of apoptosis of bladder cancer cells. The protein is DEP domain-containing protein 1A (DEPDC1) of Homo sapiens (Human).